The chain runs to 867 residues: FO synthase (867 aa).

Residues 1-22 (MTTSATSGTGPADPAGPTENSM) are disordered. Radical SAM core domains are found at residues 75–325 (ITYS…LQAP) and 534–769 (VTYI…LLHP). The cofG-like stretch occupies residues 76–407 (TYSKSVFVPL…PRLRPHVAAL (332 aa)). [4Fe-4S] cluster contacts are provided by cysteine 89, cysteine 93, cysteine 96, cysteine 548, cysteine 552, and cysteine 555. Residues 511–844 (EGPALDALCG…KPRTTLYGPV (334 aa)) form a cofH-like region. The tract at residues 835–867 (KPRTTLYGPVPEERQRAARDSDGHLPELLPVLD) is disordered. The span at 845–859 (PEERQRAARDSDGHL) shows a compositional bias: basic and acidic residues.

The protein in the N-terminal section; belongs to the radical SAM superfamily. CofG family. In the C-terminal section; belongs to the radical SAM superfamily. CofH family. It depends on [4Fe-4S] cluster as a cofactor.

The enzyme catalyses 5-amino-6-(D-ribitylamino)uracil + L-tyrosine + S-adenosyl-L-methionine = 5-amino-5-(4-hydroxybenzyl)-6-(D-ribitylimino)-5,6-dihydrouracil + 2-iminoacetate + 5'-deoxyadenosine + L-methionine + H(+). It carries out the reaction 5-amino-5-(4-hydroxybenzyl)-6-(D-ribitylimino)-5,6-dihydrouracil + S-adenosyl-L-methionine = 7,8-didemethyl-8-hydroxy-5-deazariboflavin + 5'-deoxyadenosine + L-methionine + NH4(+) + H(+). The protein operates within cofactor biosynthesis; coenzyme F0 biosynthesis. Its function is as follows. Catalyzes the radical-mediated synthesis of 7,8-didemethyl-8-hydroxy-5-deazariboflavin (FO) from 5-amino-6-(D-ribitylamino)uracil and L-tyrosine. This is FO synthase (fbiC) from Streptomyces coelicolor (strain ATCC BAA-471 / A3(2) / M145).